The chain runs to 222 residues: Cytochrome b6 (222 aa).

Residues Ile39–Phe59 traverse the membrane as a helical segment. Cys42 is a heme c binding site. Heme b is bound by residues His93 and His107. The next 3 helical transmembrane spans lie at Ala97–Phe117, Leu123–Tyr143, and Leu193–Ile213. Heme b contacts are provided by His194 and His209.

Belongs to the cytochrome b family. PetB subfamily. As to quaternary structure, the 4 large subunits of the cytochrome b6-f complex are cytochrome b6, subunit IV (17 kDa polypeptide, PetD), cytochrome f and the Rieske protein, while the 4 small subunits are PetG, PetL, PetM and PetN. The complex functions as a dimer. The cofactor is heme b. Heme c is required as a cofactor.

It is found in the cellular thylakoid membrane. Its function is as follows. Component of the cytochrome b6-f complex, which mediates electron transfer between photosystem II (PSII) and photosystem I (PSI), cyclic electron flow around PSI, and state transitions. This chain is Cytochrome b6, found in Rippkaea orientalis (strain PCC 8801 / RF-1) (Cyanothece sp. (strain PCC 8801)).